The sequence spans 421 residues: Gamma-glutamyl phosphate reductase (421 aa).

Belongs to the gamma-glutamyl phosphate reductase family.

The protein resides in the cytoplasm. The enzyme catalyses L-glutamate 5-semialdehyde + phosphate + NADP(+) = L-glutamyl 5-phosphate + NADPH + H(+). Its pathway is amino-acid biosynthesis; L-proline biosynthesis; L-glutamate 5-semialdehyde from L-glutamate: step 2/2. Catalyzes the NADPH-dependent reduction of L-glutamate 5-phosphate into L-glutamate 5-semialdehyde and phosphate. The product spontaneously undergoes cyclization to form 1-pyrroline-5-carboxylate. The chain is Gamma-glutamyl phosphate reductase from Brucella abortus (strain 2308).